Consider the following 452-residue polypeptide: tRNA-2-methylthio-N(6)-dimethylallyladenosine synthase (452 aa).

The region spanning 16-134 (KRFFISTWGC…LPEYIERVKT (119 aa)) is the MTTase N-terminal domain. Positions 25, 61, 95, 171, 175, and 178 each coordinate [4Fe-4S] cluster. The 231-residue stretch at 157-387 (RKSDIKAFVT…VEAVNEIMAR (231 aa)) folds into the Radical SAM core domain. A TRAM domain is found at 390-452 (KEFEGKTVEV…NSFSLTGEII (63 aa)).

It belongs to the methylthiotransferase family. MiaB subfamily. Monomer. Requires [4Fe-4S] cluster as cofactor.

It is found in the cytoplasm. It catalyses the reaction N(6)-dimethylallyladenosine(37) in tRNA + (sulfur carrier)-SH + AH2 + 2 S-adenosyl-L-methionine = 2-methylsulfanyl-N(6)-dimethylallyladenosine(37) in tRNA + (sulfur carrier)-H + 5'-deoxyadenosine + L-methionine + A + S-adenosyl-L-homocysteine + 2 H(+). Its function is as follows. Catalyzes the methylthiolation of N6-(dimethylallyl)adenosine (i(6)A), leading to the formation of 2-methylthio-N6-(dimethylallyl)adenosine (ms(2)i(6)A) at position 37 in tRNAs that read codons beginning with uridine. This Clostridium novyi (strain NT) protein is tRNA-2-methylthio-N(6)-dimethylallyladenosine synthase.